A 486-amino-acid chain; its full sequence is Dipeptide and tripeptide permease B (486 aa).

The Cytoplasmic segment spans residues 1–27 (MNKPVSIGLLQQPKPFFMIFFVELWER). Residues 28–48 (FGYYGVQGVLTVYFVQKLGFS) form a helical membrane-spanning segment. Residues 49 to 52 (QEQA) are Periplasmic-facing. Residues 53-73 (FITFGAFAALVFGLISIGGYV) form a helical membrane-spanning segment. The Cytoplasmic portion of the chain corresponds to 74-82 (GDHLLGTKR). Residues 83 to 103 (TIVLGAIVLAIGYFMTGLSIL) traverse the membrane as a helical segment. The Periplasmic segment spans residues 104 to 106 (HPN). The helical transmembrane segment at 107–127 (LIFYALGTIAVGNGLFKANPA) threads the bilayer. At 128–146 (SLLSKCYPPKDPRLDGAFT) the chain is on the cytoplasmic side. A helical membrane pass occupies residues 147 to 167 (LFYMSINLGSLFSLALAPVIA). At 168 to 172 (EKFSY) the chain is on the periplasmic side. A helical membrane pass occupies residues 173 to 193 (AVTYNICGIGLIIALLVYIFC). The Cytoplasmic segment spans residues 194–211 (RNTVRNIGSEPDHQRINY). Residues 212–232 (TNLFLVVAGSVVMVYVCAWLM) traverse the membrane as a helical segment. Position 233 (His233) is a topological domain, periplasmic. Residues 234 to 254 (NVKIANIMLITLSVIVVFIFF) form a helical membrane-spanning segment. At 255 to 267 (REALKQDKIGRNK) the chain is on the cytoplasmic side. The helical transmembrane segment at 268-288 (MFVAFILMLQAIVFFILYAQM) threads the bilayer. At 289-311 (PTSLNFFAIHNVHHQLLGFNINP) the chain is on the periplasmic side. The chain crosses the membrane as a helical span at residues 312 to 332 (VSFQALNPFWIVVASPILAVL). Over 333–348 (YTHWGAKGKDLTMPAK) the chain is Cytoplasmic. The helical transmembrane segment at 349–369 (FAVGMFLCSLGFLTAAAAGLW) threads the bilayer. Over 370 to 375 (FADEQG) the chain is Periplasmic. Residues 376–396 (LTSAWFIVLVYLFQGVGELMI) form a helical membrane-spanning segment. The Cytoplasmic portion of the chain corresponds to 397–419 (SALGLAMIAALVPQYLMGFILGM). The chain crosses the membrane as a helical span at residues 420 to 440 (WYLTQATSSLLGGYVAALTAA). Topologically, residues 441-456 (PKGITDPLQTLPVYTS) are periplasmic. Residues 457-477 (VFGKIGIATFIVAIIMAATVP) form a helical membrane-spanning segment. At 478–486 (LLNRMMQEK) the chain is on the cytoplasmic side.

Belongs to the major facilitator superfamily. Proton-dependent oligopeptide transporter (POT/PTR) (TC 2.A.17) family. DtpB subfamily.

The protein localises to the cell inner membrane. Functionally, proton-dependent permease that transports di- and tripeptides. This Photorhabdus luminescens (Xenorhabdus luminescens) protein is Dipeptide and tripeptide permease B.